Consider the following 125-residue polypeptide: Calcitonin receptor-stimulating peptide 1 (125 aa).

An N-terminal signal peptide occupies residues 1-25 (MGFWKFPPFLVLSILVLYQAGMFHA). A propeptide spanning residues 26-77 (APFRSVFDGRFDPATLDEEESRLLLAAMVNDYEQMRTRESEKAQKTEGSRIQ) is cleaved from the precursor. Cysteine 81 and cysteine 86 form a disulfide bridge.

The protein belongs to the calcitonin family.

Its subcellular location is the secreted. Functionally, stimulates cAMP production via the calcitonin receptor (CT) but not via the CT-like (CL) receptor. This chain is Calcitonin receptor-stimulating peptide 1 (CRSP1), found in Ovis aries (Sheep).